The chain runs to 578 residues: Membrane protein insertase YidC (578 aa).

Residues 7–27 (FLAIAISLGILLGFQGLYRHF) traverse the membrane as a helical segment. A disordered region spans residues 35–70 (ARTATNAGQGKPNNTLGAVPTDATASQSPPPKEGAR). A compositionally biased stretch (polar residues) spans 37–50 (TATNAGQGKPNNTL). 4 helical membrane-spanning segments follow: residues 362–382 (LVGN…AAFY), 436–456 (LPML…FVTI), 491–511 (HISP…TMYL), and 530–550 (FMPI…VIYW).

Belongs to the OXA1/ALB3/YidC family. Type 1 subfamily. As to quaternary structure, interacts with the Sec translocase complex via SecD. Specifically interacts with transmembrane segments of nascent integral membrane proteins during membrane integration.

Its subcellular location is the cell inner membrane. Required for the insertion and/or proper folding and/or complex formation of integral membrane proteins into the membrane. Involved in integration of membrane proteins that insert both dependently and independently of the Sec translocase complex, as well as at least some lipoproteins. Aids folding of multispanning membrane proteins. The polypeptide is Membrane protein insertase YidC (Granulibacter bethesdensis (strain ATCC BAA-1260 / CGDNIH1)).